The chain runs to 388 residues: Meiotic driver wtf13 (388 aa).

Residues 1 to 29 (MKNKDYPLRSSMDELSTKNDNEIDLEKGP) show a composition bias toward basic and acidic residues. The segment at 1–39 (MKNKDYPLRSSMDELSTKNDNEIDLEKGPLPEYNSEDGS) is disordered. 9 consecutive transmembrane segments (helical) span residues 89–109 (LLIS…CVNP), 119–139 (AFSV…FCFF), 152–172 (VTVI…AQCV), 182–202 (CVKV…VGLY), 207–227 (DLVV…FGCV), 243–263 (CSIS…IWTL), 267–287 (LFGL…TKGL), 297–317 (ATGY…LFFY), and 331–351 (FIGN…GGIG).

It belongs to the WTF family. As to quaternary structure, homomer. Forms protein aggregates. The two isoforms can interact with each other and with themselves. High sequence similarity is required for their interaction.

It localises to the spore membrane. The protein localises to the vacuole membrane. It is found in the ascus epiplasm. The protein resides in the cytoplasm. Its subcellular location is the endoplasmic reticulum membrane. Its function is as follows. Promotes unequal transmission of alleles from the parental zygote to progeny spores by acting as poison/antidote system where the poison and antidote proteins are produced from the same locus; the poison component is trans-acting and targets all spores within an ascus whereas the antidote component is spore-specific, leading to poisoning of all progeny that do not inherit the allele. In terms of biological role, localizes isoform 2 to the vacuole thereby facilitating its degradation. In addition to suppressing isoform 2, also suppresses S.pombe strain FY29033 wtf18 isoform 2. Forms toxic aggregates that disrupt spore maturation. This Schizosaccharomyces pombe (strain 972 / ATCC 24843) (Fission yeast) protein is Meiotic driver wtf13.